Reading from the N-terminus, the 591-residue chain is Transcription factor COE1 (591 aa).

Met1 bears the N-acetylmethionine mark. Positions 1–14 (MFGIQESIQRSGSS) are enriched in polar residues. Residues 1–21 (MFGIQESIQRSGSSMKEEPLG) form a disordered region. Lys16 participates in a covalent cross-link: Glycyl lysine isopeptide (Lys-Gly) (interchain with G-Cter in SUMO1); alternate. A Glycyl lysine isopeptide (Lys-Gly) (interchain with G-Cter in SUMO2); alternate cross-link involves residue Lys16. The interval 63 to 66 (RKSN) is interaction with DNA. The segment at 151-170 (CRVLLTHEIMCSRCCDKKSC) adopts a C5-type zinc-finger fold. 2 interaction with DNA regions span residues 197–204 (NCLKNAGN) and 236–239 (NNSK). Positions 262–345 (PCIKAISPSE…KGTPGRFIYT (84 aa)) constitute an IPT/TIG domain. Positions 457–480 (GFTRNSSSVSPHGYVPSTTPQQTN) are disordered.

This sequence belongs to the COE family. In terms of assembly, homodimer. Interacts with ZNF423 and ZNF521, leading to prevent EBF1 to bind DNA and activate target genes. Interacts with CCR4-NOT component CNOT3. As to quaternary structure, (Microbial infection) Interacts with Epstein-barr virus protein EBNA2.

It localises to the nucleus. Functionally, key pioneer transcription factor of B-cell specification and commitment. Recognizes variations of the palindromic sequence 5'-ATTCCCNNGGGAATT-3'. Operates in a transcription factor network to activate B-cell-specific genes and repress genes associated with alternative cell fates. For instance, positively regulates many B-cell specific genes including BCR or CD40 while repressing genes that direct cells into alternative lineages, including GATA3 and TCF7 for the T-cell lineage. In addition to its role during lymphopoiesis, controls the thermogenic gene program in adipocytes during development and in response to environmental cold. In terms of biological role, (Microbial infection) Acts as a chromatin anchor for Epstein-Barr virus EBNA2 to mediate the assembly of EBNA2 chromatin complexes in B-cells. In addition, binds to the viral LMP1 proximal promoter and promotes its expression during latency. The protein is Transcription factor COE1 (EBF1) of Homo sapiens (Human).